The primary structure comprises 65 residues: Large ribosomal subunit protein bL35 (65 aa).

Positions 1–22 are disordered; that stretch reads MPKIKTLRSAAKRFKKTASGKF. The span at 10 to 22 shows a compositional bias: basic residues; sequence AAKRFKKTASGKF.

It belongs to the bacterial ribosomal protein bL35 family.

In Buchnera aphidicola subsp. Schizaphis graminum (strain Sg), this protein is Large ribosomal subunit protein bL35.